Here is a 73-residue protein sequence, read N- to C-terminus: UPF0235 protein HY04AAS1_1378 (73 aa).

Belongs to the UPF0235 family.

In Hydrogenobaculum sp. (strain Y04AAS1), this protein is UPF0235 protein HY04AAS1_1378.